The following is a 381-amino-acid chain: Mannitol-1-phosphate 5-dehydrogenase (381 aa).

3–14 is a binding site for NAD(+); it reads TLHFGAGNIGRG.

Belongs to the mannitol dehydrogenase family.

It carries out the reaction D-mannitol 1-phosphate + NAD(+) = beta-D-fructose 6-phosphate + NADH + H(+). The sequence is that of Mannitol-1-phosphate 5-dehydrogenase from Aeromonas salmonicida (strain A449).